Reading from the N-terminus, the 195-residue chain is Protein GrpE (195 aa).

It belongs to the GrpE family. As to quaternary structure, homodimer.

The protein localises to the cytoplasm. Its function is as follows. Participates actively in the response to hyperosmotic and heat shock by preventing the aggregation of stress-denatured proteins, in association with DnaK and GrpE. It is the nucleotide exchange factor for DnaK and may function as a thermosensor. Unfolded proteins bind initially to DnaJ; upon interaction with the DnaJ-bound protein, DnaK hydrolyzes its bound ATP, resulting in the formation of a stable complex. GrpE releases ADP from DnaK; ATP binding to DnaK triggers the release of the substrate protein, thus completing the reaction cycle. Several rounds of ATP-dependent interactions between DnaJ, DnaK and GrpE are required for fully efficient folding. The polypeptide is Protein GrpE (Francisella tularensis subsp. holarctica (strain FTNF002-00 / FTA)).